A 185-amino-acid polypeptide reads, in one-letter code: Ribosome-recycling factor (185 aa).

Residues 137–158 (DELKKLEKDHTASEDEVKRAQD) form a disordered region.

Belongs to the RRF family.

Its subcellular location is the cytoplasm. Its function is as follows. Responsible for the release of ribosomes from messenger RNA at the termination of protein biosynthesis. May increase the efficiency of translation by recycling ribosomes from one round of translation to another. The polypeptide is Ribosome-recycling factor (Desulfitobacterium hafniense (strain Y51)).